The sequence spans 274 residues: CDC48-associated ubiquitin-like/zinc finger protein 1 (274 aa).

The segment at 12–58 (LDVGKHCAYCRQLDFLPFHCSFCNEDFCSNHRLKEDHHCRWLLEHEE) adopts an AN1-type zinc-finger fold. Residues Cys-18, Cys-21, Cys-31, Cys-34, Cys-39, His-42, His-48, and Cys-50 each contribute to the Zn(2+) site. Residues 170–266 (NRIYIWCYLV…KDLDTLYLVH (97 aa)) are ubiquitin-like. Ser-273 carries the post-translational modification Phosphoserine.

Interacts (via its ubiquitin-like domain) with CDC48 (via N-terminus). Associates with the 26S proteasome. Specifically interacts with the regulatory particle (RP) subunit RPN2. Exposure to arsenite, a known inducer of protein misfolding resulting in accumulation of polyubiquitinated conjugates, enhances the association with the proteoasome. Binds to ubiquitinated proteins conjugated to a 4 or more molecule ubiquitin chain. Binding to ubiquitinated proteins is zinc-dependent.

The protein resides in the cytoplasm. The protein localises to the nucleus. Its function is as follows. Promotes efficient arsenite-induced clearance of stress granules (SGs). May have a role in the ubiquitin-proteasome system (UPS) protecting cells from metalloid-induced proteotoxicity. The polypeptide is CDC48-associated ubiquitin-like/zinc finger protein 1 (Saccharomyces cerevisiae (strain ATCC 204508 / S288c) (Baker's yeast)).